A 316-amino-acid polypeptide reads, in one-letter code: UPF0761 membrane protein PM1616 (316 aa).

The next 6 membrane-spanning stretches (helical) occupy residues 36–56 (MLAL…FPVF), 92–112 (QMSA…INSI), 128–148 (LVFS…LIGA), 172–192 (ILSF…YTVV), 204–224 (IGAL…LWYV), and 236–256 (AMAT…VILI).

This sequence belongs to the UPF0761 family.

Its subcellular location is the cell inner membrane. This is UPF0761 membrane protein PM1616 from Pasteurella multocida (strain Pm70).